Here is a 210-residue protein sequence, read N- to C-terminus: UPF0173 protein PYRAB01190 (210 aa).

Belongs to the UPF0173 family.

The protein is UPF0173 protein PYRAB01190 of Pyrococcus abyssi (strain GE5 / Orsay).